We begin with the raw amino-acid sequence, 282 residues long: 4-hydroxy-3-methylbut-2-enyl diphosphate reductase (282 aa).

Cys-14 is a [4Fe-4S] cluster binding site. 2 residues coordinate (2E)-4-hydroxy-3-methylbut-2-enyl diphosphate: His-43 and His-78. Dimethylallyl diphosphate contacts are provided by His-43 and His-78. Residues His-43 and His-78 each coordinate isopentenyl diphosphate. Cys-100 is a [4Fe-4S] cluster binding site. His-128 contributes to the (2E)-4-hydroxy-3-methylbut-2-enyl diphosphate binding site. Residue His-128 coordinates dimethylallyl diphosphate. Position 128 (His-128) interacts with isopentenyl diphosphate. The active-site Proton donor is the Glu-130. Thr-164 contributes to the (2E)-4-hydroxy-3-methylbut-2-enyl diphosphate binding site. Cys-192 contacts [4Fe-4S] cluster. Ser-220, Ser-221, Asn-222, and Ser-266 together coordinate (2E)-4-hydroxy-3-methylbut-2-enyl diphosphate. Dimethylallyl diphosphate-binding residues include Ser-220, Ser-221, Asn-222, and Ser-266. Ser-220, Ser-221, Asn-222, and Ser-266 together coordinate isopentenyl diphosphate.

Belongs to the IspH family. Requires [4Fe-4S] cluster as cofactor.

It carries out the reaction isopentenyl diphosphate + 2 oxidized [2Fe-2S]-[ferredoxin] + H2O = (2E)-4-hydroxy-3-methylbut-2-enyl diphosphate + 2 reduced [2Fe-2S]-[ferredoxin] + 2 H(+). The enzyme catalyses dimethylallyl diphosphate + 2 oxidized [2Fe-2S]-[ferredoxin] + H2O = (2E)-4-hydroxy-3-methylbut-2-enyl diphosphate + 2 reduced [2Fe-2S]-[ferredoxin] + 2 H(+). It functions in the pathway isoprenoid biosynthesis; dimethylallyl diphosphate biosynthesis; dimethylallyl diphosphate from (2E)-4-hydroxy-3-methylbutenyl diphosphate: step 1/1. The protein operates within isoprenoid biosynthesis; isopentenyl diphosphate biosynthesis via DXP pathway; isopentenyl diphosphate from 1-deoxy-D-xylulose 5-phosphate: step 6/6. Catalyzes the conversion of 1-hydroxy-2-methyl-2-(E)-butenyl 4-diphosphate (HMBPP) into a mixture of isopentenyl diphosphate (IPP) and dimethylallyl diphosphate (DMAPP). Acts in the terminal step of the DOXP/MEP pathway for isoprenoid precursor biosynthesis. In Clostridium perfringens (strain 13 / Type A), this protein is 4-hydroxy-3-methylbut-2-enyl diphosphate reductase.